Reading from the N-terminus, the 551-residue chain is Methionine--tRNA ligase (551 aa).

Positions 12-22 (PYANGPLHFGH) match the 'HIGH' region motif. Zn(2+) contacts are provided by C144, C147, C157, and C160. A 'KMSKS' region motif is present at residues 330–334 (QFSKS). K333 is an ATP binding site.

The protein belongs to the class-I aminoacyl-tRNA synthetase family. MetG type 1 subfamily. Monomer. Zn(2+) serves as cofactor.

The protein resides in the cytoplasm. The catalysed reaction is tRNA(Met) + L-methionine + ATP = L-methionyl-tRNA(Met) + AMP + diphosphate. In terms of biological role, is required not only for elongation of protein synthesis but also for the initiation of all mRNA translation through initiator tRNA(fMet) aminoacylation. This is Methionine--tRNA ligase from Chlamydia abortus (strain DSM 27085 / S26/3) (Chlamydophila abortus).